The following is a 358-amino-acid chain: Alanine racemase (358 aa).

The Proton acceptor; specific for D-alanine role is filled by lysine 34. N6-(pyridoxal phosphate)lysine is present on lysine 34. A substrate-binding site is contributed by arginine 129. Tyrosine 254 (proton acceptor; specific for L-alanine) is an active-site residue. A substrate-binding site is contributed by methionine 302.

This sequence belongs to the alanine racemase family. Requires pyridoxal 5'-phosphate as cofactor.

The enzyme catalyses L-alanine = D-alanine. It functions in the pathway amino-acid biosynthesis; D-alanine biosynthesis; D-alanine from L-alanine: step 1/1. Functionally, catalyzes the interconversion of L-alanine and D-alanine. May also act on other amino acids. This Vibrio atlanticus (strain LGP32) (Vibrio splendidus (strain Mel32)) protein is Alanine racemase (alr).